We begin with the raw amino-acid sequence, 137 residues long: Nucleoside diphosphate kinase (137 aa).

Positions 10, 58, 86, 92, 103, and 113 each coordinate ATP. Histidine 116 functions as the Pros-phosphohistidine intermediate in the catalytic mechanism.

This sequence belongs to the NDK family. As to quaternary structure, homotetramer. Mg(2+) is required as a cofactor.

It localises to the cytoplasm. It catalyses the reaction a 2'-deoxyribonucleoside 5'-diphosphate + ATP = a 2'-deoxyribonucleoside 5'-triphosphate + ADP. The enzyme catalyses a ribonucleoside 5'-diphosphate + ATP = a ribonucleoside 5'-triphosphate + ADP. Major role in the synthesis of nucleoside triphosphates other than ATP. The ATP gamma phosphate is transferred to the NDP beta phosphate via a ping-pong mechanism, using a phosphorylated active-site intermediate. The polypeptide is Nucleoside diphosphate kinase (Helicobacter pylori (strain ATCC 700392 / 26695) (Campylobacter pylori)).